A 358-amino-acid chain; its full sequence is Probable dual-specificity RNA methyltransferase RlmN 1 (358 aa).

The 226-residue stretch at 101-326 folds into the Radical SAM core domain; that stretch reads MQAGGTLCIS…REKGFYTLLR (226 aa). Cysteines 108 and 337 form a disulfide. 3 residues coordinate [4Fe-4S] cluster: Cys-115, Cys-119, and Cys-122. Residues 162–163, Ser-194, 218–220, and Asn-294 contribute to the S-adenosyl-L-methionine site; these read GE and SLN. The S-methylcysteine intermediate role is filled by Cys-337.

This sequence belongs to the radical SAM superfamily. RlmN family. Requires [4Fe-4S] cluster as cofactor.

Its subcellular location is the cytoplasm. The enzyme catalyses adenosine(2503) in 23S rRNA + 2 reduced [2Fe-2S]-[ferredoxin] + 2 S-adenosyl-L-methionine = 2-methyladenosine(2503) in 23S rRNA + 5'-deoxyadenosine + L-methionine + 2 oxidized [2Fe-2S]-[ferredoxin] + S-adenosyl-L-homocysteine. It catalyses the reaction adenosine(37) in tRNA + 2 reduced [2Fe-2S]-[ferredoxin] + 2 S-adenosyl-L-methionine = 2-methyladenosine(37) in tRNA + 5'-deoxyadenosine + L-methionine + 2 oxidized [2Fe-2S]-[ferredoxin] + S-adenosyl-L-homocysteine. Specifically methylates position 2 of adenine 2503 in 23S rRNA and position 2 of adenine 37 in tRNAs. The polypeptide is Probable dual-specificity RNA methyltransferase RlmN 1 (Protochlamydia amoebophila (strain UWE25)).